The sequence spans 180 residues: Large ribosomal subunit protein uL5 (180 aa).

The protein belongs to the universal ribosomal protein uL5 family. As to quaternary structure, part of the 50S ribosomal subunit; part of the 5S rRNA/L5/L18/L25 subcomplex. Contacts the 5S rRNA and the P site tRNA. Forms a bridge to the 30S subunit in the 70S ribosome.

Its function is as follows. This is one of the proteins that bind and probably mediate the attachment of the 5S RNA into the large ribosomal subunit, where it forms part of the central protuberance. In the 70S ribosome it contacts protein S13 of the 30S subunit (bridge B1b), connecting the 2 subunits; this bridge is implicated in subunit movement. Contacts the P site tRNA; the 5S rRNA and some of its associated proteins might help stabilize positioning of ribosome-bound tRNAs. This is Large ribosomal subunit protein uL5 from Mycoplasma pneumoniae (strain ATCC 29342 / M129 / Subtype 1) (Mycoplasmoides pneumoniae).